The primary structure comprises 403 residues: Phospholipase A1-II 2 (403 aa).

The active-site Acyl-ester intermediate is the S218. Catalysis depends on charge relay system residues S218, D286, and H323. The tract at residues 381–403 (GPDGRWVLQDHEPDDDDDDDDDD) is disordered. Residues 392–403 (EPDDDDDDDDDD) show a composition bias toward acidic residues.

The protein belongs to the AB hydrolase superfamily. Lipase family.

It localises to the cytoplasm. Its function is as follows. Acylhydrolase that catalyzes the hydrolysis of phospholipids at the sn-1 position. This Oryza sativa subsp. indica (Rice) protein is Phospholipase A1-II 2.